Reading from the N-terminus, the 95-residue chain is RING finger protein Z (95 aa).

G2 carries the N-myristoyl glycine; by host lipid modification. Residues 38–74 (CKSCWFANRGLIACSDHYLCLNCLTRLRSQSQFCGIC) form an RING-type; atypical zinc finger. The PTAP/PSAP motif motif lies at 88–91 (PSAP).

Belongs to the arenaviridae Z protein family. As to quaternary structure, interacts with protein NP; this interaction probably directs the encapsidated genome to budding sites. Interacts (via RING domain) with polymerase L; this interaction inhibits viral transcription and replication, Z partially blocks the product exit tunnel for the releasing nascent RNA product. Interacts with the glycoprotein complex; this interaction plays a role in virion budding. Interacts with host eIF4E; this interaction results in eIF4E reduced affinity for its substrate, the 5'-m7 G cap structure. Interacts (via late-budding domain) with host TSG101; this interaction is essential for budding and release of viral particles. Interacts with host RPLP0; this interaction may serve to load ribosome-like particles inside the virion. Interacts with host PML; this interaction induces PML bodies redistribution in the cytoplasm upon viral infection. Post-translationally, myristoylation is required for the role of RING finger protein Z in assembly and budding.

It localises to the virion. Its subcellular location is the host cytoplasm. It is found in the host perinuclear region. The protein localises to the host cell membrane. Functionally, plays a crucial role in virion assembly and budding. Expressed late in the virus life cycle, it acts as an inhibitor of viral transcription and RNA synthesis by interacting with the viral polymerase L. Presumably recruits the NP encapsidated genome to cellular membranes at budding sites via direct interaction with NP. Plays critical roles in the final steps of viral release by interacting with host TSG101, a member of the vacuolar protein-sorting pathway and using other cellular host proteins involved in vesicle formation pathway. The budding of the virus progeny occurs after association of protein Z with the viral glycoprotein complex SSP-GP1-GP2 at the cell periphery, step that requires myristoylation of protein Z. Also selectively represses protein production by associating with host eIF4E. In cell-based minigenome assay, has an inhibitory effect on the ribonucleoprotein machinery (vRNP), which is responsible for the replication and transcription of the viral genome. This chain is RING finger protein Z, found in Pirital mammarenavirus (isolate Rat/Venezuela/VAV-488/1995) (PIRV).